A 678-amino-acid chain; its full sequence is uncharacterized protein (678 aa).

This is an uncharacterized protein from Ostreid herpesvirus 1 (isolate France) (OsHV-1).